The following is a 125-amino-acid chain: NADH dehydrogenase [ubiquinone] 1 beta subcomplex subunit 8, mitochondrial (125 aa).

Residues 1-29 constitute a mitochondrion transit peptide; that stretch reads MAGRLSGVASRIMGGNGVVARSVGSSLRQ. Residues 78-98 traverse the membrane as a helical segment; the sequence is ALAWLSGGLGFFVGLGLLAVL.

It belongs to the complex I NDUFB8 subunit family. In terms of assembly, complex I is composed of at least 49 different subunits.

The protein localises to the mitochondrion inner membrane. In terms of biological role, accessory subunit of the mitochondrial membrane respiratory chain NADH dehydrogenase (Complex I), that is believed not to be involved in catalysis. Complex I functions in the transfer of electrons from NADH to the respiratory chain. The immediate electron acceptor for the enzyme is believed to be ubiquinone. The chain is NADH dehydrogenase [ubiquinone] 1 beta subcomplex subunit 8, mitochondrial from Arabidopsis thaliana (Mouse-ear cress).